Consider the following 233-residue polypeptide: MAAPIAVALDAPDVETASRWAAAVAPHVSTLKVGLELYLRYGPAVVEAVRGARETALFLDLKLHDIPATVAGAARSVAGLAPAFLTVHAAGGADMVRAAVEAAPETRIAAVTVLTSLDEAALGAVGMRGPARDAVRRLAVLAVEAGARALVCSPQEAAMVRAEVGPDVTLITPGVRPAGAAQGDQARVATPEAALAAGADLLVIGRPITRAPDPGAAAAALAAELQKTGASPS.

Substrate is bound by residues D10, K32, 60–69 (DLKLHDIPAT), T115, R176, Q185, G205, and R206. K62 acts as the Proton donor in catalysis.

Belongs to the OMP decarboxylase family. Type 1 subfamily. In terms of assembly, homodimer.

It catalyses the reaction orotidine 5'-phosphate + H(+) = UMP + CO2. It participates in pyrimidine metabolism; UMP biosynthesis via de novo pathway; UMP from orotate: step 2/2. Catalyzes the decarboxylation of orotidine 5'-monophosphate (OMP) to uridine 5'-monophosphate (UMP). This chain is Orotidine 5'-phosphate decarboxylase, found in Thermobifida fusca (strain YX).